The chain runs to 96 residues: UPF0235 protein YggU (96 aa).

This sequence belongs to the UPF0235 family.

This Escherichia coli O157:H7 protein is UPF0235 protein YggU.